A 199-amino-acid chain; its full sequence is Prolactin (199 aa).

Cys-4 and Cys-11 are oxidised to a cystine. Phosphoserine is present on residues Ser-26, Ser-34, and Ser-90. 2 cysteine pairs are disulfide-bonded: Cys-58/Cys-174 and Cys-191/Cys-199.

The protein belongs to the somatotropin/prolactin family. As to quaternary structure, interacts with PRLR.

Its subcellular location is the secreted. Prolactin acts primarily on the mammary gland by promoting lactation. The polypeptide is Prolactin (PRL) (Loxodonta africana (African elephant)).